The chain runs to 413 residues: Calmodulin-binding protein CmbB (413 aa).

6 FNIP repeats span residues 104 to 148 (FNHP…LSDC), 149 to 192 (YNQA…LGKG), 222 to 257 (SLPP…FGDG), 258 to 301 (FNQP…FHQF), 304 to 343 (FSQT…FSEK), and 344 to 386 (YNHP…LNGY).

As to quaternary structure, interacts with calmodulin in the presence of Ca(2+).

This chain is Calmodulin-binding protein CmbB, found in Dictyostelium discoideum (Social amoeba).